We begin with the raw amino-acid sequence, 611 residues long: MFS siderochrome iron transporter C (611 aa).

The tract at residues 1–25 is disordered; that stretch reads MPFLDHRTGPSYGTIDQMEQHSDDE. An N-linked (GlcNAc...) asparagine glycan is attached at asparagine 62. 14 helical membrane passes run 71 to 91, 107 to 127, 136 to 156, 165 to 185, 194 to 214, 228 to 248, 282 to 302, 313 to 333, 353 to 373, 393 to 413, 418 to 438, 449 to 469, 486 to 506, and 560 to 580; these read VIAY…GQTV, LIST…PPMA, FEAF…MAAS, AQIF…VFIA, AFLA…GPTI, YGMW…SLLL, MGGL…LTLA, SIVA…FWES, ALAG…SVQP, VTQT…ILIK, YRAF…LMMV, ILVT…PVQL, MFLT…GAVW, and LLIL…AMED. The disordered stretch occupies residues 592 to 611; it reads VDPVPAEEGEIEPNRHVKRT.

This sequence belongs to the major facilitator superfamily.

It is found in the membrane. In terms of biological role, major facilitator transporter that contributes to the maintenance of intracellular siderophore ferricrocin (FC) levels. Plays a role in conidiation and confers protection against oxidative stress. Also contributes to fungal virulence in the Galleria mellonella animal model system. Does not appear to play a role in either siderophore export or uptake. The chain is MFS siderochrome iron transporter C from Aspergillus fumigatus (strain ATCC MYA-4609 / CBS 101355 / FGSC A1100 / Af293) (Neosartorya fumigata).